The sequence spans 197 residues: Probable chorismate pyruvate-lyase (197 aa).

Positions 1 to 14 (MRFDAADAHWRETP) are enriched in basic and acidic residues. Residues 1–25 (MRFDAADAHWRETPRPGASGAQKDW) form a disordered region. 3 residues coordinate substrate: Arg-73, Leu-111, and Glu-173.

Belongs to the UbiC family.

The protein localises to the cytoplasm. The enzyme catalyses chorismate = 4-hydroxybenzoate + pyruvate. The protein operates within cofactor biosynthesis; ubiquinone biosynthesis. Functionally, removes the pyruvyl group from chorismate, with concomitant aromatization of the ring, to provide 4-hydroxybenzoate (4HB) for the ubiquinone pathway. The sequence is that of Probable chorismate pyruvate-lyase from Burkholderia thailandensis (strain ATCC 700388 / DSM 13276 / CCUG 48851 / CIP 106301 / E264).